The sequence spans 116 residues: Selenoprotein H (116 aa).

Position 20 is an N6-acetyllysine (Lys-20). Residues 35–38 (CTSU) constitute a cross-link (cysteinyl-selenocysteine (Cys-Sec); redox-active). Sec-38 is a non-standard amino acid (selenocysteine).

The protein belongs to the SelWTH family.

May be involved in a redox-related process. In Mus musculus (Mouse), this protein is Selenoprotein H.